The chain runs to 185 residues: Protein TIFY 5 (185 aa).

A Tify domain is found at 38 to 72 (AAEARRNLTIFYNGRMCAVNVTELQARTIISMASQ). The disordered stretch occupies residues 77-185 (KQQQQQIQGR…RAAAPLYARR (109 aa)). Residues 137–157 (PRAGLQAAAAAAPTMNQPPAA) show a composition bias toward low complexity. The Jas motif lies at 155–182 (PAASGLSMKRSLQRFLEKRKTRAAAPLY). The short motif at 162-169 (MKRSLQRF) is the Nuclear localization signal element.

This sequence belongs to the TIFY/JAZ family. Ubiquitinated. Targeted for degradation by the SCF(COI1) E3 ubiquitin ligase-proteasome pathway during jasmonate signaling.

Its subcellular location is the nucleus. Functionally, repressor of jasmonate responses. The polypeptide is Protein TIFY 5 (Oryza sativa subsp. indica (Rice)).